A 132-amino-acid chain; its full sequence is Small ribosomal subunit protein uS8 (132 aa).

This sequence belongs to the universal ribosomal protein uS8 family. Part of the 30S ribosomal subunit. Contacts proteins S5 and S12.

Its function is as follows. One of the primary rRNA binding proteins, it binds directly to 16S rRNA central domain where it helps coordinate assembly of the platform of the 30S subunit. This Rhodospirillum rubrum (strain ATCC 11170 / ATH 1.1.1 / DSM 467 / LMG 4362 / NCIMB 8255 / S1) protein is Small ribosomal subunit protein uS8.